We begin with the raw amino-acid sequence, 417 residues long: Zinc-finger homeodomain protein 4 (417 aa).

Residues 1 to 12 (MVSILQLQTRTE) show a composition bias toward polar residues. Disordered regions lie at residues 1–22 (MVSI…ASAA) and 31–50 (RQQQ…FQER). A compositionally biased stretch (low complexity) spans 13–22 (ASPASSASAA). The span at 36–46 (QEGEEEEEEFE) shows a compositional bias: acidic residues. A ZF-HD dimerization-type; degenerate zinc finger spans residues 145 to 194 (YRECLKNHAAAIGGNATDGCGEFMPSGEEGSLEALKCSACGCHRNFHRKE). 2 disordered regions span residues 281 to 309 (DEMD…FRTK) and 361 to 417 (NLAK…LKLE). The span at 286–298 (SGGGGGVGRGGGS) shows a compositional bias: gly residues. The segment at residues 303–366 (KKRFRTKFTA…NNKHNLAKKP (64 aa)) is a DNA-binding region (homeobox). Residues 368-417 (PSSPPPPPQIPPMSMPPSPPPPQIPPMSMPPSPPPMPMPMPPSPPQLKLE) are compositionally biased toward pro residues.

As to quaternary structure, homo- and heterodimer with other ZFHD proteins.

It is found in the nucleus. Its function is as follows. Putative transcription factor. The sequence is that of Zinc-finger homeodomain protein 4 (ZHD4) from Oryza sativa subsp. japonica (Rice).